Consider the following 390-residue polypeptide: S-adenosylmethionine synthase 3 (390 aa).

Position 9 (Glu9) interacts with Mg(2+). His15 is a binding site for ATP. Residue Glu43 participates in K(+) binding. 2 residues coordinate L-methionine: Glu56 and Gln99. ATP-binding positions include Asp167–Lys169, Ser235–Phe238, Asp246, Arg252–Lys253, Ala269, Lys273, and Lys277. Position 246 (Asp246) interacts with L-methionine. Lys277 serves as a coordination point for L-methionine.

This sequence belongs to the AdoMet synthase family. As to quaternary structure, homotetramer. Interacts with GRF3. It depends on Mn(2+) as a cofactor. Requires Mg(2+) as cofactor. The cofactor is Co(2+). K(+) is required as a cofactor.

Its subcellular location is the cytoplasm. It catalyses the reaction L-methionine + ATP + H2O = S-adenosyl-L-methionine + phosphate + diphosphate. Its pathway is amino-acid biosynthesis; S-adenosyl-L-methionine biosynthesis; S-adenosyl-L-methionine from L-methionine: step 1/1. With respect to regulation, inhibited by 5,5'-dithiobis-2-nitrobenzoic acid (DTNB) and N-ethylmaleimide (NEM) (in vitro). Functionally, catalyzes the formation of S-adenosylmethionine from methionine and ATP. The reaction comprises two steps that are both catalyzed by the same enzyme: formation of S-adenosylmethionine (AdoMet) and triphosphate, and subsequent hydrolysis of the triphosphate. Involved in the biosynthesis of lignin. The polypeptide is S-adenosylmethionine synthase 3 (METK3) (Arabidopsis thaliana (Mouse-ear cress)).